The primary structure comprises 137 residues: Glycine cleavage system H protein (137 aa).

Residues 36-118 (PAIIGITEYA…YGEGWLLKVE (83 aa)) form the Lipoyl-binding domain. Lys77 carries the N6-lipoyllysine modification.

Belongs to the GcvH family. In terms of assembly, the glycine cleavage system is composed of four proteins: P, T, L and H. It depends on (R)-lipoate as a cofactor.

Its function is as follows. The glycine cleavage system catalyzes the degradation of glycine. The H protein shuttles the methylamine group of glycine from the P protein to the T protein. The polypeptide is Glycine cleavage system H protein (Bifidobacterium longum (strain NCC 2705)).